Here is a 248-residue protein sequence, read N- to C-terminus: 3-deoxy-manno-octulosonate cytidylyltransferase (248 aa).

Belongs to the KdsB family.

The protein resides in the cytoplasm. It carries out the reaction 3-deoxy-alpha-D-manno-oct-2-ulosonate + CTP = CMP-3-deoxy-beta-D-manno-octulosonate + diphosphate. The protein operates within nucleotide-sugar biosynthesis; CMP-3-deoxy-D-manno-octulosonate biosynthesis; CMP-3-deoxy-D-manno-octulosonate from 3-deoxy-D-manno-octulosonate and CTP: step 1/1. It functions in the pathway bacterial outer membrane biogenesis; lipopolysaccharide biosynthesis. Activates KDO (a required 8-carbon sugar) for incorporation into bacterial lipopolysaccharide in Gram-negative bacteria. The protein is 3-deoxy-manno-octulosonate cytidylyltransferase of Escherichia coli O127:H6 (strain E2348/69 / EPEC).